Reading from the N-terminus, the 549-residue chain is Formate--tetrahydrofolate ligase (549 aa).

Residue 60 to 67 (TPYGEGKT) participates in ATP binding.

It belongs to the formate--tetrahydrofolate ligase family.

It carries out the reaction (6S)-5,6,7,8-tetrahydrofolate + formate + ATP = (6R)-10-formyltetrahydrofolate + ADP + phosphate. Its pathway is one-carbon metabolism; tetrahydrofolate interconversion. This is Formate--tetrahydrofolate ligase from Campylobacter concisus (strain 13826).